The chain runs to 293 residues: Protease HtpX (293 aa).

A run of 2 helical transmembrane segments spans residues 4-24 and 34-54; these read IALF…VLSL and GLMI…LLMS. A Zn(2+)-binding site is contributed by H139. E140 is a catalytic residue. H143 provides a ligand contact to Zn(2+). Transmembrane regions (helical) follow at residues 158-178 and 193-213; these read VVNT…AGFM and LIYF…ASII. A Zn(2+)-binding site is contributed by E222.

Belongs to the peptidase M48B family. Requires Zn(2+) as cofactor.

The protein localises to the cell inner membrane. The polypeptide is Protease HtpX (Escherichia coli O127:H6 (strain E2348/69 / EPEC)).